Reading from the N-terminus, the 320-residue chain is Glycerol-3-phosphate dehydrogenase [NAD(P)+] (320 aa).

NADPH-binding residues include F11, R30, and K102. The sn-glycerol 3-phosphate site is built by K102, G130, and S132. A134 contacts NADPH. The sn-glycerol 3-phosphate site is built by K185, D238, S248, R249, and N250. Residue K185 is the Proton acceptor of the active site. Residue R249 coordinates NADPH. E270 provides a ligand contact to NADPH.

The protein belongs to the NAD-dependent glycerol-3-phosphate dehydrogenase family.

It is found in the cytoplasm. The catalysed reaction is sn-glycerol 3-phosphate + NAD(+) = dihydroxyacetone phosphate + NADH + H(+). It carries out the reaction sn-glycerol 3-phosphate + NADP(+) = dihydroxyacetone phosphate + NADPH + H(+). The protein operates within membrane lipid metabolism; glycerophospholipid metabolism. In terms of biological role, catalyzes the reduction of the glycolytic intermediate dihydroxyacetone phosphate (DHAP) to sn-glycerol 3-phosphate (G3P), the key precursor for phospholipid synthesis. This is Glycerol-3-phosphate dehydrogenase [NAD(P)+] from Roseobacter denitrificans (strain ATCC 33942 / OCh 114) (Erythrobacter sp. (strain OCh 114)).